The chain runs to 232 residues: MAKLGKRTRAAREAVAGKSDLTVEEAVALIKANATSKFDETVEIAMCLGVDPRHADQMVRGVVSLPNGTGKTVRVAVFARGPKAEEAQAAGADIVGAEDLMETIQSGKIEFDRCIATPDMMPIVGRLGKILGPRNLMPNPKVGTVTMDVKAAVEAAKGGEVQFKAEKAGVVHAGVGKASFDEAKLVENVRAFVDAVSKAKPSGAKGSYMKKIALSSTMGPGVTVAVDSATGN.

It belongs to the universal ribosomal protein uL1 family. Part of the 50S ribosomal subunit.

Its function is as follows. Binds directly to 23S rRNA. The L1 stalk is quite mobile in the ribosome, and is involved in E site tRNA release. Functionally, protein L1 is also a translational repressor protein, it controls the translation of the L11 operon by binding to its mRNA. The sequence is that of Large ribosomal subunit protein uL1 from Dinoroseobacter shibae (strain DSM 16493 / NCIMB 14021 / DFL 12).